A 350-amino-acid polypeptide reads, in one-letter code: Ketol-acid reductoisomerase (NADP(+)) (350 aa).

In terms of domain architecture, KARI N-terminal Rossmann spans 3 to 183 (AQIWYEDDGD…GALRAGAIKT (181 aa)). NADP(+) is bound by residues 26–29 (YGSQ), R49, S52, S54, and 84–87 (DQYQ). The active site involves H109. NADP(+) is bound at residue G135. The region spanning 184 to 327 (TFKEETETDL…PKLRAMFSWN (144 aa)) is the KARI C-terminal knotted domain. The Mg(2+) site is built by D192, E196, E228, and E232. S253 provides a ligand contact to substrate.

Belongs to the ketol-acid reductoisomerase family. It depends on Mg(2+) as a cofactor.

It catalyses the reaction (2R)-2,3-dihydroxy-3-methylbutanoate + NADP(+) = (2S)-2-acetolactate + NADPH + H(+). The catalysed reaction is (2R,3R)-2,3-dihydroxy-3-methylpentanoate + NADP(+) = (S)-2-ethyl-2-hydroxy-3-oxobutanoate + NADPH + H(+). It participates in amino-acid biosynthesis; L-isoleucine biosynthesis; L-isoleucine from 2-oxobutanoate: step 2/4. It functions in the pathway amino-acid biosynthesis; L-valine biosynthesis; L-valine from pyruvate: step 2/4. In terms of biological role, involved in the biosynthesis of branched-chain amino acids (BCAA). Catalyzes an alkyl-migration followed by a ketol-acid reduction of (S)-2-acetolactate (S2AL) to yield (R)-2,3-dihydroxy-isovalerate. In the isomerase reaction, S2AL is rearranged via a Mg-dependent methyl migration to produce 3-hydroxy-3-methyl-2-ketobutyrate (HMKB). In the reductase reaction, this 2-ketoacid undergoes a metal-dependent reduction by NADPH to yield (R)-2,3-dihydroxy-isovalerate. The sequence is that of Ketol-acid reductoisomerase (NADP(+)) from Bifidobacterium animalis subsp. lactis (strain AD011).